A 63-amino-acid polypeptide reads, in one-letter code: Large ribosomal subunit protein uL29 (63 aa).

This sequence belongs to the universal ribosomal protein uL29 family.

This Haemophilus ducreyi (strain 35000HP / ATCC 700724) protein is Large ribosomal subunit protein uL29.